The chain runs to 122 residues: Large ribosomal subunit protein uL18 (122 aa).

The protein belongs to the universal ribosomal protein uL18 family. As to quaternary structure, part of the 50S ribosomal subunit; part of the 5S rRNA/L5/L18/L25 subcomplex. Contacts the 5S and 23S rRNAs.

Functionally, this is one of the proteins that bind and probably mediate the attachment of the 5S RNA into the large ribosomal subunit, where it forms part of the central protuberance. In Petrotoga mobilis (strain DSM 10674 / SJ95), this protein is Large ribosomal subunit protein uL18.